Consider the following 79-residue polypeptide: Translational regulator CsrA (79 aa).

It belongs to the CsrA/RsmA family. In terms of assembly, homodimer; the beta-strands of each monomer intercalate to form a hydrophobic core, while the alpha-helices form wings that extend away from the core.

Its subcellular location is the cytoplasm. Functionally, a translational regulator that binds mRNA to regulate translation initiation and/or mRNA stability. Usually binds in the 5'-UTR at or near the Shine-Dalgarno sequence preventing ribosome-binding, thus repressing translation. Its main target seems to be the major flagellin gene, while its function is anatagonized by FliW. This Maridesulfovibrio salexigens (strain ATCC 14822 / DSM 2638 / NCIMB 8403 / VKM B-1763) (Desulfovibrio salexigens) protein is Translational regulator CsrA.